The sequence spans 313 residues: Malate dehydrogenase (313 aa).

NAD(+) is bound by residues 11-16 and D35; that span reads GAGNIG. The substrate site is built by R86 and R92. NAD(+) is bound by residues N99 and 122–124; that span reads ISN. Positions 124 and 155 each coordinate substrate. The Proton acceptor role is filled by H179.

This sequence belongs to the LDH/MDH superfamily. MDH type 3 family.

The enzyme catalyses (S)-malate + NAD(+) = oxaloacetate + NADH + H(+). Catalyzes the reversible oxidation of malate to oxaloacetate. This is Malate dehydrogenase from Sorangium cellulosum (strain So ce56) (Polyangium cellulosum (strain So ce56)).